The primary structure comprises 363 residues: Peptide chain release factor 1 (363 aa).

Q237 is modified (N5-methylglutamine). The segment covering E284–R296 has biased composition (basic and acidic residues). The tract at residues E284–R305 is disordered.

This sequence belongs to the prokaryotic/mitochondrial release factor family. In terms of processing, methylated by PrmC. Methylation increases the termination efficiency of RF1.

The protein resides in the cytoplasm. Its function is as follows. Peptide chain release factor 1 directs the termination of translation in response to the peptide chain termination codons UAG and UAA. The protein is Peptide chain release factor 1 of Shewanella baltica (strain OS185).